We begin with the raw amino-acid sequence, 325 residues long: MIALGIEGTAHTLGIGIVTEKSVLANVFDTLTTEKGGIHPKEAAEHHARLLKPLLRKALETAGVTMEDVDLIAFSQGPGLGPALRVVATAARALAIKYNKPIVGVNHCIAHVEITKMFGVKDPVGLYVSGGNTQVLALEGGRYRVFGETLDIGIGNAIDTFARELGIGFPGGPKIEKLALKGEKYIELPYAVKGMDLSFSGVLTEAVRKYRTGKYRIEDLAYSFQETAFAALVEVTERAVAHTGKEEVVLVGGVAANNRLREMLKIMAEDRGIKFFVPPYDLCRDNGAMIAYTGLRMYRGGVRFKIEDTVVKQKFRTDEVEVVWD.

Positions 107, 111, and 127 each coordinate Fe cation. Substrate is bound by residues 127 to 131 (YVSGG), Asp-159, Gly-172, Glu-176, and Asn-257. Residue Asp-285 participates in Fe cation binding.

It belongs to the KAE1 / TsaD family. Monomer. Component of the KEOPS complex that consists of Kae1, Bud32, Cgi121 and Pcc1; the whole complex dimerizes. The cofactor is Fe(2+).

The protein resides in the cytoplasm. It catalyses the reaction L-threonylcarbamoyladenylate + adenosine(37) in tRNA = N(6)-L-threonylcarbamoyladenosine(37) in tRNA + AMP + H(+). Its function is as follows. Required for the formation of a threonylcarbamoyl group on adenosine at position 37 (t(6)A37) in tRNAs that read codons beginning with adenine. Is a component of the KEOPS complex that is probably involved in the transfer of the threonylcarbamoyl moiety of threonylcarbamoyl-AMP (TC-AMP) to the N6 group of A37. Kae1 likely plays a direct catalytic role in this reaction, but requires other protein(s) of the complex to fulfill this activity. The protein is tRNA N6-adenosine threonylcarbamoyltransferase of Thermococcus kodakarensis (strain ATCC BAA-918 / JCM 12380 / KOD1) (Pyrococcus kodakaraensis (strain KOD1)).